We begin with the raw amino-acid sequence, 360 residues long: MLVWLAEYLVKFYSGFNVFSYLTFRAIVSLLTALFISLWMGPHLIAWLQKLQIGQVVRNDGPESHFSKRGTPTMGGLMILFSITISVLMWAYPSNPYVWCVLFILIGYGIVGFIDDYRKVVRKNTKGLIARWKYFWQSIIALAAAFTMYSIGKDTSATELVVPFFKDIMPQLGLLYVLLAYFVIVGTSNAVNLTDGLDGLAIMPTVFVAAGFALVAWATGNVNFAAYLHIPYLRHAGELVIVCTAIVGAGLGFLWFNTYPAQVFMGDVGSLALGGALGTIAVLLRQEFLLVIMGGVFVVETLSVILQVGSFKLRGQRIFRMAPIHHHYELKGWPEPRVIVRFWIISLMLVLIGLATLKLR.

The next 10 helical transmembrane spans lie at 27–47 (IVSL…LIAW), 72–92 (PTMG…MWAY), 94–114 (SNPY…VGFI), 132–152 (WKYF…YSIG), 168–188 (IMPQ…VGTS), 199–219 (GLAI…AWAT), 236–256 (AGEL…FLWF), 263–283 (VFMG…IAVL), 288–308 (FLLV…ILQV), and 338–358 (VIVR…ATLK).

This sequence belongs to the glycosyltransferase 4 family. MraY subfamily. Mg(2+) is required as a cofactor.

It is found in the cell inner membrane. It catalyses the reaction UDP-N-acetyl-alpha-D-muramoyl-L-alanyl-gamma-D-glutamyl-meso-2,6-diaminopimeloyl-D-alanyl-D-alanine + di-trans,octa-cis-undecaprenyl phosphate = di-trans,octa-cis-undecaprenyl diphospho-N-acetyl-alpha-D-muramoyl-L-alanyl-D-glutamyl-meso-2,6-diaminopimeloyl-D-alanyl-D-alanine + UMP. It functions in the pathway cell wall biogenesis; peptidoglycan biosynthesis. In terms of biological role, catalyzes the initial step of the lipid cycle reactions in the biosynthesis of the cell wall peptidoglycan: transfers peptidoglycan precursor phospho-MurNAc-pentapeptide from UDP-MurNAc-pentapeptide onto the lipid carrier undecaprenyl phosphate, yielding undecaprenyl-pyrophosphoryl-MurNAc-pentapeptide, known as lipid I. The polypeptide is Phospho-N-acetylmuramoyl-pentapeptide-transferase (Yersinia pestis bv. Antiqua (strain Angola)).